The chain runs to 473 residues: MASCVGSRTLSKDDVNYRMHFRMINEQQVEDITIDFFYRPHTITLLSFTIISLMYFAFTRDDCVPEDNIWRGILSVIFFFLIISVLAFPNGPFTRPHPALWRMVFGLSVLYFLFLVFLLFLNFEQVKSLMYWLDPNLRYATREADIMEYAVNCHVITWERIVSHFDIFAFGHFWGWAMKALLIRSYGLCWTISITWELTELFFMHLLPNFAECWWDQVILDILLCNGGGIWLGMVVCRFLEMRTYHWASFKDIHTTTGKIKRAVLQFTPASWTYVRWFDPKSSFQRVAGIYLFMIIWQLTELNTFFLKHIFVFQASHPLSWCRILFIGCITAPTVRQYYAYLTDTQCKRVGTQCWVFGVIGFLEAIVCIKFGQDLFSKTQILYVVLWLLCVAFTTFLCLYGMVWYAEHYGHREKTYSECEDGTYSPEISWYHGKGSKGSEDSPPKHSNNNESHSSRRRNRHSKSKVTNGVGKK.

The residue at position 2 (Ala2) is an N-acetylalanine. The Cytoplasmic portion of the chain corresponds to 2-35 (ASCVGSRTLSKDDVNYRMHFRMINEQQVEDITID). The helical transmembrane segment at 36–56 (FFYRPHTITLLSFTIISLMYF) threads the bilayer. The Lumenal portion of the chain corresponds to 57 to 72 (AFTRDDCVPEDNIWRG). Residues 73–93 (ILSVIFFFLIISVLAFPNGPF) traverse the membrane as a helical segment. Topologically, residues 94–102 (TRPHPALWR) are cytoplasmic. Residues 103–123 (MVFGLSVLYFLFLVFLLFLNF) form a helical membrane-spanning segment. At 124 to 186 (EQVKSLMYWL…AMKALLIRSY (63 aa)) the chain is on the lumenal side. The helical transmembrane segment at 187–207 (GLCWTISITWELTELFFMHLL) threads the bilayer. At 208–216 (PNFAECWWD) the chain is on the cytoplasmic side. The chain crosses the membrane as a helical span at residues 217-237 (QVILDILLCNGGGIWLGMVVC). At 238–286 (RFLEMRTYHWASFKDIHTTTGKIKRAVLQFTPASWTYVRWFDPKSSFQR) the chain is on the lumenal side. Residues 287–307 (VAGIYLFMIIWQLTELNTFFL) form a helical membrane-spanning segment. The Cytoplasmic segment spans residues 308 to 319 (KHIFVFQASHPL). Residues 320 to 342 (SWCRILFIGCITAPTVRQYYAYL) form a helical membrane-spanning segment. The Lumenal segment spans residues 343–355 (TDTQCKRVGTQCW). A helical membrane pass occupies residues 356–376 (VFGVIGFLEAIVCIKFGQDLF). Over 377 to 383 (SKTQILY) the chain is Cytoplasmic. Residues 384 to 404 (VVLWLLCVAFTTFLCLYGMVW) form a helical membrane-spanning segment. Topologically, residues 405 to 473 (YAEHYGHREK…SKVTNGVGKK (69 aa)) are lumenal. 4 positions are modified to phosphoserine: Ser417, Ser425, Ser442, and Ser454. The tract at residues 430–473 (WYHGKGSKGSEDSPPKHSNNNESHSSRRRNRHSKSKVTNGVGKK) is disordered. Positions 455–464 (SRRRNRHSKS) are enriched in basic residues.

The protein belongs to the phosphatidyl serine synthase family.

Its subcellular location is the endoplasmic reticulum membrane. It carries out the reaction a 1,2-diacyl-sn-glycero-3-phosphoethanolamine + L-serine = a 1,2-diacyl-sn-glycero-3-phospho-L-serine + ethanolamine. The catalysed reaction is a 1,2-diacyl-sn-glycero-3-phosphocholine + L-serine = a 1,2-diacyl-sn-glycero-3-phospho-L-serine + choline. Its pathway is phospholipid metabolism; phosphatidylserine biosynthesis. Its function is as follows. Catalyzes a base-exchange reaction in which the polar head group of phosphatidylethanolamine (PE) or phosphatidylcholine (PC) is replaced by L-serine. Catalyzes mainly the conversion of phosphatidylcholine but also converts, in vitro and to a lesser extent, phosphatidylethanolamine. The sequence is that of Phosphatidylserine synthase 1 (Ptdss1) from Rattus norvegicus (Rat).